A 347-amino-acid chain; its full sequence is 4-hydroxy-2-oxovalerate aldolase 1 (347 aa).

The Pyruvate carboxyltransferase domain occupies 11-263 (VVLHDMCLRD…ETGVDLFKLM (253 aa)). 19–20 (RD) is a substrate binding site. Position 20 (Asp20) interacts with Mn(2+). The active-site Proton acceptor is the His23. Substrate contacts are provided by Ser173 and His202. Mn(2+) is bound by residues His202 and His204. A substrate-binding site is contributed by Tyr293.

Belongs to the 4-hydroxy-2-oxovalerate aldolase family.

It carries out the reaction (S)-4-hydroxy-2-oxopentanoate = acetaldehyde + pyruvate. The chain is 4-hydroxy-2-oxovalerate aldolase 1 (lapG) from Azoarcus sp. (strain BH72).